The chain runs to 329 residues: Cyclin-dependent kinase 7 (329 aa).

The 284-residue stretch at 4-287 (NEKLDFLGEG…ASQALRTKYF (284 aa)) folds into the Protein kinase domain. ATP contacts are provided by residues 10-18 (LGEGQFATV) and Lys33. Asp129 serves as the catalytic Proton acceptor. Phosphoserine; by CDK1 and CDK2 is present on Ser156. The residue at position 162 (Thr162) is a Phosphothreonine. A disordered region spans residues 309-329 (LKEQSNPAMATKRKRAEALEQ). Ser313 carries the phosphoserine modification.

The protein belongs to the protein kinase superfamily. CMGC Ser/Thr protein kinase family. CDC2/CDKX subfamily. Associates primarily with cyclin-H (CCNH) and MAT1 to form the CAK complex. CAK can further associate with the core-TFIIH to form the TFIIH basal transcription factor; this complex is sensitive to UV light. The CAK complex binds to p53/TP53 in response to DNA damage. Interacts with CDK2, SF1/NR5A1, PUF60 and PRKCI. Interacts with HINT1. Post-translationally, phosphorylation of Ser-156 during mitosis inactivates the enzyme. Phosphorylation of Thr-162 is required for activity. Phosphorylated at Ser-156 and Thr-162 by CDK2.

The protein localises to the nucleus. Its subcellular location is the cytoplasm. It is found in the perinuclear region. It carries out the reaction L-seryl-[protein] + ATP = O-phospho-L-seryl-[protein] + ADP + H(+). It catalyses the reaction L-threonyl-[protein] + ATP = O-phospho-L-threonyl-[protein] + ADP + H(+). The catalysed reaction is [DNA-directed RNA polymerase] + ATP = phospho-[DNA-directed RNA polymerase] + ADP + H(+). Phosphorylation at Thr-162 is required for enzymatic activity. The association of p53/TP53 to the CAK complex in response to DNA damage reduces kinase activity toward CDK2 and RNA polymerase II repetitive C-terminal domain (CTD), thus stopping cell cycle progression. Functionally, serine/threonine kinase involved in cell cycle control and in RNA polymerase II-mediated RNA transcription. Cyclin-dependent kinases (CDKs) are activated by the binding to a cyclin and mediate the progression through the cell cycle. Each different complex controls a specific transition between 2 subsequent phases in the cell cycle. Required for both activation and complex formation of CDK1/cyclin-B during G2-M transition, and for activation of CDK2/cyclins during G1-S transition (but not complex formation). CDK7 is the catalytic subunit of the CDK-activating kinase (CAK) complex. Phosphorylates SPT5/SUPT5H, SF1/NR5A1, POLR2A, p53/TP53, CDK1, CDK2, CDK4, CDK6 and CDK11B/CDK11. Initiates transcription by RNA polymerase II by mediating phosphorylation of POLR2A at 'Ser-5' of the repetitive C-terminal domain (CTD) when POLR2A is in complex with DNA, promoting dissociation from DNA and initiation. CAK activates the cyclin-associated kinases CDK1, CDK2, CDK4 and CDK6 by threonine phosphorylation, thus regulating cell cycle progression. CAK complexed to the core-TFIIH basal transcription factor activates RNA polymerase II by serine phosphorylation of the CTD of POLR2A, allowing its escape from the promoter and elongation of the transcripts. Its expression and activity are constant throughout the cell cycle. Upon DNA damage, triggers p53/TP53 activation by phosphorylation, but is inactivated in turn by p53/TP53; this feedback loop may lead to an arrest of the cell cycle and of the transcription, helping in cell recovery, or to apoptosis. Required for DNA-bound peptides-mediated transcription and cellular growth inhibition. The sequence is that of Cyclin-dependent kinase 7 (Cdk7) from Rattus norvegicus (Rat).